The following is a 599-amino-acid chain: UvrABC system protein C (599 aa).

In terms of domain architecture, GIY-YIG spans 15 to 93 (PCPGVYRMLD…IKALQPRYNV (79 aa)). The region spanning 202–237 (QQVINELVIRMEEASGQLAFEQAAYYRDRIASLRQI) is the UVR domain.

The protein belongs to the UvrC family. As to quaternary structure, interacts with UvrB in an incision complex.

The protein localises to the cytoplasm. Its function is as follows. The UvrABC repair system catalyzes the recognition and processing of DNA lesions. UvrC both incises the 5' and 3' sides of the lesion. The N-terminal half is responsible for the 3' incision and the C-terminal half is responsible for the 5' incision. In Nitrosococcus oceani (strain ATCC 19707 / BCRC 17464 / JCM 30415 / NCIMB 11848 / C-107), this protein is UvrABC system protein C.